Consider the following 273-residue polypeptide: Dermonecrotic toxin LsaSicTox-alphaIB1bii (273 aa).

Residue histidine 5 is part of the active site. 2 residues coordinate Mg(2+): glutamate 25 and aspartate 27. Residue histidine 41 is the Nucleophile of the active site. Disulfide bonds link cysteine 45-cysteine 51 and cysteine 47-cysteine 190. Position 85 (aspartate 85) interacts with Mg(2+).

This sequence belongs to the arthropod phospholipase D family. Class II subfamily. Requires Mg(2+) as cofactor. In terms of tissue distribution, expressed by the venom gland.

It is found in the secreted. The enzyme catalyses an N-(acyl)-sphingosylphosphocholine = an N-(acyl)-sphingosyl-1,3-cyclic phosphate + choline. It catalyses the reaction an N-(acyl)-sphingosylphosphoethanolamine = an N-(acyl)-sphingosyl-1,3-cyclic phosphate + ethanolamine. It carries out the reaction a 1-acyl-sn-glycero-3-phosphocholine = a 1-acyl-sn-glycero-2,3-cyclic phosphate + choline. The catalysed reaction is a 1-acyl-sn-glycero-3-phosphoethanolamine = a 1-acyl-sn-glycero-2,3-cyclic phosphate + ethanolamine. Dermonecrotic toxins cleave the phosphodiester linkage between the phosphate and headgroup of certain phospholipids (sphingolipid and lysolipid substrates), forming an alcohol (often choline) and a cyclic phosphate. This toxin acts on sphingomyelin (SM). It may also act on ceramide phosphoethanolamine (CPE), lysophosphatidylcholine (LPC) and lysophosphatidylethanolamine (LPE), but not on lysophosphatidylserine (LPS), and lysophosphatidylglycerol (LPG). It acts by transphosphatidylation, releasing exclusively cyclic phosphate products as second products. Induces dermonecrosis, hemolysis, increased vascular permeability, edema, inflammatory response, and platelet aggregation. The protein is Dermonecrotic toxin LsaSicTox-alphaIB1bii of Loxosceles sabina (Tucson recluse spider).